A 452-amino-acid chain; its full sequence is Ribosome biogenesis protein YTM1 (452 aa).

The segment at 17–98 is ubiquitin-like (UBL) domain; that stretch reads IVSQPVVFTT…EETLEIEYIE (82 aa). WD repeat units follow at residues 110 to 148, 150 to 195, and 208 to 247; these read PHEDWVSSVSCQLPRYFLTASYDGNLRAFDLSKNLTASI, AHPA…NPMA, and LHTAPVSSISANAAGTHVLTASWDGLIGYWDATVPSTDEV. A disordered region spans residues 245-269; the sequence is DEVPEPALNERDRSKKRRRVEEGEV. Residues 252–269 show a composition bias toward basic and acidic residues; it reads LNERDRSKKRRRVEEGEV. WD repeat units lie at residues 282–322, 325–364, 371–411, and 418–452; these read SHTA…CSHT, ASEKPFLDMALTPDGNSALATSTDRSMTLYDLRSSTTILT, MHPS…SAMA, and GSGQKVLSVDWKRGIVGVGGERGLEMWKVGEEQKV.

The protein belongs to the WD repeat WDR12/YTM1 family. Component of the NOP7 complex, composed of ERB1, NOP7 and YTM1. The complex is held together by ERB1, which interacts with NOP7 via its N-terminal domain and with YTM1 via a high-affinity interaction between the seven-bladed beta-propeller domains of the 2 proteins. The NOP7 complex associates with the 66S pre-ribosome. Interacts (via UBL domain) with MDN1 (via VWFA/MIDAS domain).

It localises to the nucleus. Its subcellular location is the nucleolus. The protein localises to the nucleoplasm. In terms of biological role, component of the NOP7 complex, which is required for maturation of the 25S and 5.8S ribosomal RNAs and formation of the 60S ribosome. The polypeptide is Ribosome biogenesis protein YTM1 (Laccaria bicolor (strain S238N-H82 / ATCC MYA-4686) (Bicoloured deceiver)).